Consider the following 477-residue polypeptide: Otolin-1 (477 aa).

Residues 1–23 (MWMFSWLCAILIILAIAGMNTIA) form the signal peptide. 2 disordered regions span residues 28-55 (HTKF…PEEE) and 111-337 (QKGE…KGEL). Positions 33 to 42 (KKSEEREMPK) are enriched in basic and acidic residues. In terms of domain architecture, Collagen-like 1 spans 116–175 (GETGQPGPKGEAGNLGIPGPPGVVGPQGPRGYKGEKGLKGERGDQGVPGYPGKPGAQGEP). Hydroxyproline is present on residues proline 133 and proline 136. Residues 147–159 (YKGEKGLKGERGD) are compositionally biased toward basic and acidic residues. Proline 163, proline 166, and proline 169 each carry hydroxyproline. Lysine 178 carries the post-translational modification 5-hydroxylysine. Lysine 178 carries an O-linked (Gal...) hydroxylysine glycan. Over residues 182 to 191 (GNIGLGGVKG) the composition is skewed to gly residues. The N-linked (GlcNAc...) asparagine glycan is linked to asparagine 202. 2 Collagen-like domains span residues 209–268 (GDQG…KGSK) and 278–337 (GRNG…KGEL). Hydroxyproline is present on proline 223. Basic and acidic residues-rich tracts occupy residues 226–240 (KGEK…EMGD) and 247–277 (SGER…EGKS). A hydroxyproline mark is found at proline 283 and proline 301. Positions 298–310 (LGPPGLLGPTGPK) are enriched in low complexity. 5-hydroxylysine is present on lysine 310. A glycan (O-linked (Gal...) hydroxylysine) is linked at lysine 310. The region spanning 338 to 473 (ARVPRSAFSA…GFLLYPEETS (136 aa)) is the C1q domain. A glycan (N-linked (GlcNAc...) asparagine) is linked at asparagine 381.

Belongs to the OTOL1 family. Homooligomer; disulfide-linked; probably forms homotrimers. Interacts with OC90. Interacts with CBLN1.

The protein localises to the secreted. It localises to the extracellular space. Its subcellular location is the extracellular matrix. Its function is as follows. Collagen-like protein specifically expressed in the inner ear, which provides an organic scaffold for otoconia, a calcium carbonate structure in the saccule and utricle of the ear. Acts as a scaffold for biomineralization: sequesters calcium and forms interconnecting fibrils between otoconia that are incorporated into the calcium crystal structure. Together with OC90, modulates calcite crystal morphology and growth kinetics. In Homo sapiens (Human), this protein is Otolin-1.